Here is a 399-residue protein sequence, read N- to C-terminus: 1-deoxy-D-xylulose 5-phosphate reductoisomerase (399 aa).

Thr-10, Gly-11, Ser-12, Ile-13, and Asn-124 together coordinate NADPH. Residue Lys-125 coordinates 1-deoxy-D-xylulose 5-phosphate. Position 126 (Glu-126) interacts with NADPH. Asp-150 contacts Mn(2+). Residues Ser-151, Glu-152, Ser-186, and His-209 each coordinate 1-deoxy-D-xylulose 5-phosphate. Glu-152 provides a ligand contact to Mn(2+). Residue Gly-215 participates in NADPH binding. Positions 222, 227, 228, and 231 each coordinate 1-deoxy-D-xylulose 5-phosphate. Glu-231 contributes to the Mn(2+) binding site.

It belongs to the DXR family. It depends on Mg(2+) as a cofactor. Mn(2+) serves as cofactor.

It carries out the reaction 2-C-methyl-D-erythritol 4-phosphate + NADP(+) = 1-deoxy-D-xylulose 5-phosphate + NADPH + H(+). It participates in isoprenoid biosynthesis; isopentenyl diphosphate biosynthesis via DXP pathway; isopentenyl diphosphate from 1-deoxy-D-xylulose 5-phosphate: step 1/6. Catalyzes the NADPH-dependent rearrangement and reduction of 1-deoxy-D-xylulose-5-phosphate (DXP) to 2-C-methyl-D-erythritol 4-phosphate (MEP). The chain is 1-deoxy-D-xylulose 5-phosphate reductoisomerase from Psychromonas ingrahamii (strain DSM 17664 / CCUG 51855 / 37).